Consider the following 529-residue polypeptide: Phosphoenolpyruvate carboxykinase (ATP) (529 aa).

3 residues coordinate substrate: R60, Y195, and K201. Residues K201, H220, and 236 to 244 (GLSGTGKTT) each bind ATP. K201 and H220 together coordinate Mn(2+). D257 is a Mn(2+) binding site. E285, R323, and S448 together coordinate ATP. Position 323 (R323) interacts with substrate.

It belongs to the phosphoenolpyruvate carboxykinase (ATP) family. Mn(2+) is required as a cofactor.

It localises to the cytoplasm. It carries out the reaction oxaloacetate + ATP = phosphoenolpyruvate + ADP + CO2. It participates in carbohydrate biosynthesis; gluconeogenesis. Its function is as follows. Involved in the gluconeogenesis. Catalyzes the conversion of oxaloacetate (OAA) to phosphoenolpyruvate (PEP) through direct phosphoryl transfer between the nucleoside triphosphate and OAA. The chain is Phosphoenolpyruvate carboxykinase (ATP) from Geobacter sp. (strain M21).